The following is a 168-amino-acid chain: Peroxynitrite isomerase (168 aa).

The GXWXGXG motif lies at 25–31 (GTWRGAG). Residue histidine 160 participates in heme b binding.

It belongs to the nitrobindin family. Homodimer. It depends on heme b as a cofactor.

It catalyses the reaction peroxynitrite = nitrate. The protein operates within nitrogen metabolism. In terms of biological role, heme-binding protein able to scavenge peroxynitrite and to protect free L-tyrosine against peroxynitrite-mediated nitration, by acting as a peroxynitrite isomerase that converts peroxynitrite to nitrate. Therefore, this protein likely plays a role in peroxynitrite sensing and in the detoxification of reactive nitrogen and oxygen species (RNS and ROS, respectively). Is able to bind nitric oxide (NO) in vitro, but may act as a sensor of peroxynitrite levels in vivo. This chain is Peroxynitrite isomerase, found in Nocardia farcinica (strain IFM 10152).